The following is a 436-amino-acid chain: Serine--tRNA ligase (436 aa).

A compositionally biased stretch (basic and acidic residues) spans 43-55; the sequence is TKSEQLKQKRNEV. A disordered region spans residues 43–69; that stretch reads TKSEQLKQKRNEVSDQIAQAKRNKEDA. Residue 237 to 239 participates in L-serine binding; the sequence is TAE. 268–270 provides a ligand contact to ATP; sequence RSE. Glu291 contacts L-serine. Residue 355–358 participates in ATP binding; sequence EISS. Position 390 (Ser390) interacts with L-serine.

The protein belongs to the class-II aminoacyl-tRNA synthetase family. Type-1 seryl-tRNA synthetase subfamily. Homodimer. The tRNA molecule binds across the dimer.

The protein localises to the cytoplasm. The catalysed reaction is tRNA(Ser) + L-serine + ATP = L-seryl-tRNA(Ser) + AMP + diphosphate + H(+). It catalyses the reaction tRNA(Sec) + L-serine + ATP = L-seryl-tRNA(Sec) + AMP + diphosphate + H(+). It participates in aminoacyl-tRNA biosynthesis; selenocysteinyl-tRNA(Sec) biosynthesis; L-seryl-tRNA(Sec) from L-serine and tRNA(Sec): step 1/1. Its function is as follows. Catalyzes the attachment of serine to tRNA(Ser). Is also able to aminoacylate tRNA(Sec) with serine, to form the misacylated tRNA L-seryl-tRNA(Sec), which will be further converted into selenocysteinyl-tRNA(Sec). The protein is Serine--tRNA ligase of Lactobacillus gasseri (strain ATCC 33323 / DSM 20243 / BCRC 14619 / CIP 102991 / JCM 1131 / KCTC 3163 / NCIMB 11718 / NCTC 13722 / AM63).